The primary structure comprises 225 residues: Prolactin (225 aa).

A signal peptide spans 1–28 (MTIQGSDRKGTLLLLVMSNLLFCQNVHP). The cysteines at positions 32 and 37 are disulfide-linked. Phosphoserine occurs at positions 52 and 116. Intrachain disulfides connect C84/C200 and C217/C225.

This sequence belongs to the somatotropin/prolactin family. Interacts with PRLR.

The protein localises to the secreted. Its function is as follows. Prolactin acts primarily on the mammary gland by promoting lactation. The polypeptide is Prolactin (PRL) (Alexandromys montebelli (Japanese grass vole)).